The sequence spans 249 residues: 1-(5-phosphoribosyl)-5-[(5-phosphoribosylamino)methylideneamino] imidazole-4-carboxamide isomerase (249 aa).

Catalysis depends on D11, which acts as the Proton acceptor. D133 acts as the Proton donor in catalysis.

This sequence belongs to the HisA/HisF family.

It is found in the cytoplasm. The catalysed reaction is 1-(5-phospho-beta-D-ribosyl)-5-[(5-phospho-beta-D-ribosylamino)methylideneamino]imidazole-4-carboxamide = 5-[(5-phospho-1-deoxy-D-ribulos-1-ylimino)methylamino]-1-(5-phospho-beta-D-ribosyl)imidazole-4-carboxamide. It participates in amino-acid biosynthesis; L-histidine biosynthesis; L-histidine from 5-phospho-alpha-D-ribose 1-diphosphate: step 4/9. The chain is 1-(5-phosphoribosyl)-5-[(5-phosphoribosylamino)methylideneamino] imidazole-4-carboxamide isomerase from Haemophilus influenzae (strain 86-028NP).